The primary structure comprises 405 residues: MFILNFNKMKNVKLLLMLGTAALLAACSNEADSLTTSIDAPVTASIDLQSVSYTDLATQLNDVSDFGKMIILKDNGFNRQVHVSMDKRTKIQLDNENVRLFNGRDKDSTSFILGDEFAVLRFYRNGESISYIAYKEAQMMNEIAEFYAAPFKKTRAINEKEAFECIYDSRTRSAGKDIVSVKINIDKAKKILNLPECDYINDYIKTPQVPHGITESQTRAVPSEPKTVYVICLRENGSTIYPNEVSAQMQDAANSVYAVHGLKRYVNFHFVLYTTEYSCPSGDAKEGLEGFTASLKSNPKAEGYDDQIYFLIRWGTWDNKILGMSWFNSYNVNTASDFEASGMSTTQLMYPGVMAHELGHILGAEHTDNSKDLMYATFTGYLSHLSEKNMDIIAKNLGWEAADGD.

A signal peptide spans 1–25 (MFILNFNKMKNVKLLLMLGTAALLA). Histidine 356 serves as a coordination point for Zn(2+). Glutamate 357 is an active-site residue. Zn(2+) is bound by residues histidine 360 and histidine 366.

The protein belongs to the peptidase M10C family. Requires Zn(2+) as cofactor.

The protein localises to the secreted. The catalysed reaction is Broad proteolytic specificity, bonds hydrolyzed includes -Gly-|-Leu-, -Met-|-Leu-, -Phe-|-Leu-, -Cys-|-Leu-, -Leu-|-Gly-.. Functionally, diarrheal toxin that hydrolyzes gelatin, azocoll, actin, tropomyosin, and fibrinogen. This chain is Fragilysin (btfP), found in Bacteroides fragilis.